A 4092-amino-acid chain; its full sequence is Dynein heavy chain, cytoplasmic (4092 aa).

Residues 1–1757 form a stem region; sequence MCKNEARLAN…FISQSGYLLQ (1757 aa). Coiled-coil stretches lie at residues 154-175, 486-508, 542-566, 932-959, 1042-1063, and 1681-1705; these read VETI…QQLH, KLEQ…LQNT, KVLE…TGLE, VIKL…YVKE, YERD…VEDM, and KGLL…LVEY. AAA stretches follow at residues 1758-1979, 2036-2273, 2379-2628, and 2722-2984; these read YKFE…VLRN, QCLK…NDLV, SLEA…LVRG, and TFCD…KVGV. Residues 1796-1803, 2074-2081, 2418-2425, and 2760-2767 contribute to the ATP site; these read GPAGTGKT, GKAGCGKT, GPPGSGKT, and GASRTGKT. Coiled coils occupy residues 2993–3092, 3242–3300, and 3532–3608; these read IDGL…KRKE, KTKA…KSLT, and ITLT…EEFF. Residues 2993–3300 form a stalk region; that stretch reads IDGLRALVKL…RSISLVKSLT (308 aa). AAA regions lie at residues 3370–3599 and 3760–3970; these read LVTL…NIEK and LNWF…YLEN.

This sequence belongs to the dynein heavy chain family. As to quaternary structure, the dynein complex consists of at least two heavy chains and a number of intermediate and light chains. Interacts with DYN3.

Its subcellular location is the cytoplasm. It localises to the cytoskeleton. Cytoplasmic dynein acts as a motor for the intracellular retrograde motility of vesicles and organelles along microtubules. Dynein has ATPase activity; the force-producing power stroke is thought to occur on release of ADP. Required to maintain uniform nuclear distribution in hyphae. May play an important role in the proper orientation of the mitotic spindle into the budding daughter cell yeast. Probably required for normal progression of the cell cycle. In Saccharomyces cerevisiae (strain ATCC 204508 / S288c) (Baker's yeast), this protein is Dynein heavy chain, cytoplasmic (DYN1).